Consider the following 108-residue polypeptide: Large ribosomal subunit protein uL24 (108 aa).

Belongs to the universal ribosomal protein uL24 family. In terms of assembly, part of the 50S ribosomal subunit.

One of two assembly initiator proteins, it binds directly to the 5'-end of the 23S rRNA, where it nucleates assembly of the 50S subunit. Its function is as follows. One of the proteins that surrounds the polypeptide exit tunnel on the outside of the subunit. This is Large ribosomal subunit protein uL24 from Mycoplasmopsis pulmonis (strain UAB CTIP) (Mycoplasma pulmonis).